Consider the following 136-residue polypeptide: NADPH-dependent 7-cyano-7-deazaguanine reductase (136 aa).

Residue Cys-50 is the Thioimide intermediate of the active site. Asp-57 serves as the catalytic Proton donor. Substrate is bound by residues 72-74 and 91-92; these read YEL and HE.

This sequence belongs to the GTP cyclohydrolase I family. QueF type 1 subfamily.

The protein localises to the cytoplasm. It catalyses the reaction 7-aminomethyl-7-carbaguanine + 2 NADP(+) = 7-cyano-7-deazaguanine + 2 NADPH + 3 H(+). The protein operates within tRNA modification; tRNA-queuosine biosynthesis. Its function is as follows. Catalyzes the NADPH-dependent reduction of 7-cyano-7-deazaguanine (preQ0) to 7-aminomethyl-7-deazaguanine (preQ1). This Prochlorococcus marinus (strain MIT 9215) protein is NADPH-dependent 7-cyano-7-deazaguanine reductase.